The chain runs to 624 residues: (-)-beta-phellandrene synthase 2, chloroplastic (624 aa).

The N-terminal 48 residues, 1-48, are a transit peptide targeting the chloroplast; it reads MAIVSSVPLASKSCLHKSLISSIHKLKPFCRTIPTLGMSRPGKYVMPS. Residues Asp375, Asp379, and Asp527 each contribute to the Mg(2+) site. The DDXXD motif signature appears at 375 to 379; it reads DDMYD.

Belongs to the terpene synthase family. Tpsd subfamily. Requires Mg(2+) as cofactor. Mn(2+) serves as cofactor.

It is found in the plastid. The protein localises to the chloroplast. It carries out the reaction (2E)-geranyl diphosphate = (-)-beta-phellandrene + diphosphate. The protein operates within terpene metabolism; oleoresin biosynthesis. Functionally, terpene synthase (TPS) involved in the biosynthesis of monoterpene natural products included in conifer oleoresin secretions and volatile emissions; these compounds contribute to biotic and abiotic stress defense against herbivores and pathogens. Catalyzes the conversion of (2E)-geranyl diphosphate (GPP) to (-)-beta-phellandrene. The protein is (-)-beta-phellandrene synthase 2, chloroplastic of Picea sitchensis (Sitka spruce).